Here is a 200-residue protein sequence, read N- to C-terminus: MSSKKIVLTSSDGESFKVEEVVARKLQIVGHIIEDDCATNKIPIPNVTGEILAKVIEYCKKHVEDDDDVVETHESSTKGDKTVEEAKKKPDDVAVPESTEGDDEAEDKKEKLNEWDAKFMKDFDIKTIFDIILAANYLNVQGLFDLCSKTIADYIKDMTPEEVRELFNIENDFTPEEEEAIRNENAWTFEQDGKQQVPKP.

The segment covering 67-92 (DDVVETHESSTKGDKTVEEAKKKPDD) has biased composition (basic and acidic residues). Residues 67–109 (DDVVETHESSTKGDKTVEEAKKKPDDVAVPESTEGDDEAEDKK) form a disordered region. The interaction with the F-box domain of F-box proteins stretch occupies residues 132 to 190 (ILAANYLNVQGLFDLCSKTIADYIKDMTPEEVRELFNIENDFTPEEEEAIRNENAWTFE).

Belongs to the SKP1 family. In terms of assembly, part of a SCF (SKP1-cullin-F-box) protein ligase complex. Interacts with CPR1/CPR30. Expressed in leaves and flowers.

Its subcellular location is the nucleus. The protein operates within protein modification; protein ubiquitination. Involved in ubiquitination and subsequent proteasomal degradation of target proteins. Together with CUL1, RBX1 and a F-box protein, it forms a SCF E3 ubiquitin ligase complex. The functional specificity of this complex depends on the type of F-box protein. In the SCF complex, it serves as an adapter that links the F-box protein to CUL1. The chain is SKP1-like protein 19 (ASK19) from Arabidopsis thaliana (Mouse-ear cress).